Consider the following 124-residue polypeptide: Ribonuclease pancreatic (124 aa).

Basic and acidic residues predominate over residues 1 to 13 (KETAAAKFERQHM). A disordered region spans residues 1 to 22 (KETAAAKFERQHMDSSTSAASS). 2 residues coordinate substrate: K7 and R10. Catalysis depends on H12, which acts as the Proton acceptor. Disulfide bonds link C26-C84, C40-C95, C58-C110, and C65-C72. An N-linked (GlcNAc...) asparagine glycan is attached at N34. Residues 41 to 45 (KPVNT), K66, and R85 each bind substrate. Catalysis depends on H119, which acts as the Proton donor.

Belongs to the pancreatic ribonuclease family. Monomer. Interacts with and forms tight 1:1 complexes with RNH1. Dimerization of two such complexes may occur. Interaction with RNH1 inhibits this protein. As to expression, pancreas.

Its subcellular location is the secreted. It catalyses the reaction an [RNA] containing cytidine + H2O = an [RNA]-3'-cytidine-3'-phosphate + a 5'-hydroxy-ribonucleotide-3'-[RNA].. The enzyme catalyses an [RNA] containing uridine + H2O = an [RNA]-3'-uridine-3'-phosphate + a 5'-hydroxy-ribonucleotide-3'-[RNA].. Functionally, endonuclease that catalyzes the cleavage of RNA on the 3' side of pyrimidine nucleotides. Acts on single-stranded and double-stranded RNA. The polypeptide is Ribonuclease pancreatic (RNASE1) (Bison bison (American bison)).